A 137-amino-acid polypeptide reads, in one-letter code: Putative nucleoside diphosphate kinase (137 aa).

Positions 45, 73, 79, 90, and 100 each coordinate ATP. H103 functions as the Pros-phosphohistidine intermediate in the catalytic mechanism.

It belongs to the NDK family. Mg(2+) serves as cofactor.

It carries out the reaction a 2'-deoxyribonucleoside 5'-diphosphate + ATP = a 2'-deoxyribonucleoside 5'-triphosphate + ADP. It catalyses the reaction a ribonucleoside 5'-diphosphate + ATP = a ribonucleoside 5'-triphosphate + ADP. In terms of biological role, major role in the synthesis of nucleoside triphosphates other than ATP. The ATP gamma phosphate is transferred to the NDP beta phosphate via a ping-pong mechanism, using a phosphorylated active-site intermediate. The chain is Putative nucleoside diphosphate kinase (NME2P1) from Homo sapiens (Human).